Consider the following 254-residue polypeptide: 3-oxo-5-alpha-steroid 4-dehydrogenase 2 (254 aa).

Transmembrane regions (helical) follow at residues 8–28 (VPVL…LCLG), 72–92 (PRSL…AHYF), 146–166 (FSFG…SDYT), and 206–226 (LATW…FLGM).

The protein belongs to the steroid 5-alpha reductase family. In terms of tissue distribution, expressed in high levels in the prostate and many other androgen-sensitive tissues.

The protein localises to the microsome membrane. The protein resides in the endoplasmic reticulum membrane. It catalyses the reaction a 3-oxo-5alpha-steroid + NADP(+) = a 3-oxo-Delta(4)-steroid + NADPH + H(+). It carries out the reaction 17beta-hydroxy-5alpha-androstan-3-one + NADP(+) = testosterone + NADPH + H(+). The catalysed reaction is 5alpha-pregnane-3,20-dione + NADP(+) = progesterone + NADPH + H(+). Its function is as follows. Converts testosterone (T) into 5-alpha-dihydrotestosterone (DHT) and progesterone or corticosterone into their corresponding 5-alpha-3-oxosteroids. It plays a central role in sexual differentiation and androgen physiology. The sequence is that of 3-oxo-5-alpha-steroid 4-dehydrogenase 2 (Srd5a2) from Rattus norvegicus (Rat).